The following is a 652-amino-acid chain: Aspartate--tRNA ligase, mitochondrial (652 aa).

Residues Met-1 to Phe-46 constitute a mitochondrion transit peptide. The residue at position 218 (Thr-218) is a Phosphothreonine. Ser-241 is subject to Phosphoserine. Residues Gln-243–Lys-246 form an aspartate region. Arg-265 provides a ligand contact to L-aspartate. ATP contacts are provided by residues Arg-265 to Glu-267 and Glu-534. Arg-541 contributes to the L-aspartate binding site. Gly-583–Arg-586 contributes to the ATP binding site.

The protein belongs to the class-II aminoacyl-tRNA synthetase family. Type 1 subfamily. In terms of assembly, homodimer.

It localises to the mitochondrion matrix. The protein resides in the mitochondrion membrane. The enzyme catalyses tRNA(Asp) + L-aspartate + ATP = L-aspartyl-tRNA(Asp) + AMP + diphosphate. Catalyzes the attachment of aspartate to tRNA(Asp) in a two-step reaction: aspartate is first activated by ATP to form Asp-AMP and then transferred to the acceptor end of tRNA(Asp). The polypeptide is Aspartate--tRNA ligase, mitochondrial (Dars2) (Rattus norvegicus (Rat)).